A 149-amino-acid chain; its full sequence is Arginine repressor (149 aa).

Belongs to the ArgR family.

It localises to the cytoplasm. The protein operates within amino-acid biosynthesis; L-arginine biosynthesis [regulation]. Functionally, regulates arginine biosynthesis genes. This is Arginine repressor from Chlorobaculum tepidum (strain ATCC 49652 / DSM 12025 / NBRC 103806 / TLS) (Chlorobium tepidum).